Here is a 122-residue protein sequence, read N- to C-terminus: Large ribosomal subunit protein uL14 (122 aa).

This sequence belongs to the universal ribosomal protein uL14 family. As to quaternary structure, part of the 50S ribosomal subunit. Forms a cluster with proteins L3 and L19. In the 70S ribosome, L14 and L19 interact and together make contacts with the 16S rRNA in bridges B5 and B8.

In terms of biological role, binds to 23S rRNA. Forms part of two intersubunit bridges in the 70S ribosome. The chain is Large ribosomal subunit protein uL14 from Streptomyces coelicolor (strain ATCC BAA-471 / A3(2) / M145).